Reading from the N-terminus, the 402-residue chain is Protein kinase US3 homolog (402 aa).

Disordered stretches follow at residues 1-21 (MSSS…KVHD) and 46-88 (FPDS…SPET). The Protein kinase domain occupies 102–386 (YNIVSSLSPG…AQDILMLPLF (285 aa)). Residues 108–116 (LSPGSEGYI) and Lys-129 each bind ATP. Asp-218 acts as the Proton acceptor in catalysis.

Belongs to the protein kinase superfamily. Ser/Thr protein kinase family. In terms of processing, phosphorylated by UL13 homolog; this phosphorylation regulates subsequent phosphorylation of UL31 and UL34 homologs by US3. Autophosphorylated.

Its subcellular location is the host cytoplasm. It is found in the host nucleus. The enzyme catalyses L-seryl-[protein] + ATP = O-phospho-L-seryl-[protein] + ADP + H(+). It catalyses the reaction L-threonyl-[protein] + ATP = O-phospho-L-threonyl-[protein] + ADP + H(+). In terms of biological role, multifunctional serine/threonine kinase that plays a role in several processes including egress of virus particles from the nucleus, modulation of the actin cytoskeleton and inhibition of apoptosis. Phosphorylates UL31 and UL34 homologs, two critical regulators of capsid budding from nucleus to endoplasmic reticulum, thereby facilitating virion egress. Modulates and redistributes host components of the nuclear envelope, including LMNA, emerin/EMD and the nuclear matrix protein MATR3. Phosphorylates envelope glycoprotein B (gB), probably to direct it to the cell surface. Promotes virus intracellular spread by restructuring host cell cytoskeleton. Blocks host apoptosis to extend cell survival and allow efficient viral replication. Promotes viral gene expression by phosphorylating host HDAC2 to reduce viral genome silencing. In Gallus gallus (Chicken), this protein is Protein kinase US3 homolog (MDV092).